The sequence spans 161 residues: Cytochrome c-type biogenesis protein CcmE (161 aa).

The Cytoplasmic segment spans residues 1-8; it reads MNPRRKKR. The chain crosses the membrane as a helical; Signal-anchor for type II membrane protein span at residues 9–29; the sequence is LTLAVALIAGVAAVASLLLYA. Topologically, residues 30 to 161 are periplasmic; sequence LNSNLNLFYT…TYNQKALEDK (132 aa). Heme is bound by residues His131 and Tyr135. A disordered region spans residues 142–161; sequence EAMGQTHEKPTYNQKALEDK. Positions 147-161 are enriched in basic and acidic residues; sequence THEKPTYNQKALEDK.

Belongs to the CcmE/CycJ family.

It localises to the cell inner membrane. In terms of biological role, heme chaperone required for the biogenesis of c-type cytochromes. Transiently binds heme delivered by CcmC and transfers the heme to apo-cytochromes in a process facilitated by CcmF and CcmH. The protein is Cytochrome c-type biogenesis protein CcmE of Shewanella frigidimarina (strain NCIMB 400).